The following is a 150-amino-acid chain: Large ribosomal subunit protein bL9 (150 aa).

This sequence belongs to the bacterial ribosomal protein bL9 family.

Binds to the 23S rRNA. The polypeptide is Large ribosomal subunit protein bL9 (Leuconostoc mesenteroides subsp. mesenteroides (strain ATCC 8293 / DSM 20343 / BCRC 11652 / CCM 1803 / JCM 6124 / NCDO 523 / NBRC 100496 / NCIMB 8023 / NCTC 12954 / NRRL B-1118 / 37Y)).